Consider the following 232-residue polypeptide: LOB domain-containing protein 11 (232 aa).

Residues 1–50 form a disordered region; sequence MLKMEINGGVATPTASAVAKVTETTTPVNSPSPTSSPPPPPSPQQPPQPP. Residues 34–50 show a composition bias toward pro residues; that stretch reads TSSPPPPPSPQQPPQPP. The LOB domain occupies 54–155; sequence SPCAACKILR…AQLAKTQVEL (102 aa). Positions 181–218 are disordered; that stretch reads EQGQQKMSFESSFESGDEFISSPDEESNDLGFLEDNNN. Low complexity predominate over residues 188–202; the sequence is SFESSFESGDEFISS.

Belongs to the LOB domain-containing protein family. As to expression, expressed in young shoots, stems, leaves and flowers.

This is LOB domain-containing protein 11 (LBD11) from Arabidopsis thaliana (Mouse-ear cress).